A 271-amino-acid chain; its full sequence is Phosphatidylinositol transfer protein alpha isoform (271 aa).

6 residues coordinate a 1,2-diacyl-sn-glycero-3-phospho-(1D-myo-inositol): T59, K61, E86, N90, T97, and K195. Residue K216 is modified to N6-acetyllysine. Residues T251–V264 show a composition bias toward basic and acidic residues. A disordered region spans residues T251–D271.

This sequence belongs to the PtdIns transfer protein family. PI transfer class I subfamily. Phosphorylated by PKC in a calcium and phosphatidylserine-dependent manner. In terms of tissue distribution, expressed in a wide range of tissues.

It is found in the cytoplasm. Its subcellular location is the nucleus. The catalysed reaction is a 1,2-diacyl-sn-glycero-3-phosphocholine(in) = a 1,2-diacyl-sn-glycero-3-phosphocholine(out). It carries out the reaction a 1,2-diacyl-sn-glycero-3-phospho-(1D-myo-inositol)(in) = a 1,2-diacyl-sn-glycero-3-phospho-(1D-myo-inositol)(out). Phosphatidylinositol transfer activity is inhibited by N-ethylmaleimide. Catalyzes the transfer of phosphatidylinositol (PI) and phosphatidylcholine (PC) between membranes. Shows a preference for PI and PC containing shorter saturated or monosaturated acyl chains at the sn-1 and sn-2 positions. Preference order for PC is C16:1 &gt; C16:0 &gt; C18:1 &gt; C18:0 &gt; C20:4 and for PI is C16:1 &gt; C16:0 &gt; C18:1 &gt; C18:0 &gt; C20:4 &gt; C20:3. The polypeptide is Phosphatidylinositol transfer protein alpha isoform (Pitpna) (Rattus norvegicus (Rat)).